Reading from the N-terminus, the 512-residue chain is Transactivator/viroplasmin protein (512 aa).

Disordered stretches follow at residues 76–123 (GNER…NPVA) and 474–512 (ADSS…IPSI). A compositionally biased stretch (polar residues) spans 476–487 (SSSTSGEQNNVE). The span at 499–512 (YDERSDDHKRIPSI) shows a compositional bias: basic and acidic residues.

This sequence belongs to the caulimoviridae viroplasmin family.

It is found in the host cytoplasm. Enhances the translation of downstream ORFs on polycistronic mRNAs derived from figwort mosaic virus. This Figwort mosaic virus (strain DxS) (FMV) protein is Transactivator/viroplasmin protein.